Here is a 288-residue protein sequence, read N- to C-terminus: Phosphatidylserine decarboxylase proenzyme (288 aa).

Active-site charge relay system; for autoendoproteolytic cleavage activity residues include Asp101, His158, and Ser262. Ser262 functions as the Schiff-base intermediate with substrate; via pyruvic acid; for decarboxylase activity in the catalytic mechanism. A Pyruvic acid (Ser); by autocatalysis modification is found at Ser262.

The protein belongs to the phosphatidylserine decarboxylase family. PSD-B subfamily. Prokaryotic type I sub-subfamily. Heterodimer of a large membrane-associated beta subunit and a small pyruvoyl-containing alpha subunit. Requires pyruvate as cofactor. Post-translationally, is synthesized initially as an inactive proenzyme. Formation of the active enzyme involves a self-maturation process in which the active site pyruvoyl group is generated from an internal serine residue via an autocatalytic post-translational modification. Two non-identical subunits are generated from the proenzyme in this reaction, and the pyruvate is formed at the N-terminus of the alpha chain, which is derived from the carboxyl end of the proenzyme. The autoendoproteolytic cleavage occurs by a canonical serine protease mechanism, in which the side chain hydroxyl group of the serine supplies its oxygen atom to form the C-terminus of the beta chain, while the remainder of the serine residue undergoes an oxidative deamination to produce ammonia and the pyruvoyl prosthetic group on the alpha chain. During this reaction, the Ser that is part of the protease active site of the proenzyme becomes the pyruvoyl prosthetic group, which constitutes an essential element of the active site of the mature decarboxylase.

The protein resides in the cell membrane. It catalyses the reaction a 1,2-diacyl-sn-glycero-3-phospho-L-serine + H(+) = a 1,2-diacyl-sn-glycero-3-phosphoethanolamine + CO2. It participates in phospholipid metabolism; phosphatidylethanolamine biosynthesis; phosphatidylethanolamine from CDP-diacylglycerol: step 2/2. Functionally, catalyzes the formation of phosphatidylethanolamine (PtdEtn) from phosphatidylserine (PtdSer). This is Phosphatidylserine decarboxylase proenzyme from Alkalilimnicola ehrlichii (strain ATCC BAA-1101 / DSM 17681 / MLHE-1).